Reading from the N-terminus, the 208-residue chain is Glycerol-3-phosphate acyltransferase (208 aa).

The next 6 helical transmembrane spans lie at Pro7–Leu27, Met63–Ala83, Ala86–Phe106, Gly123–Val143, Ile149–His169, and Pro170–Tyr190.

Belongs to the PlsY family. Probably interacts with PlsX.

The protein localises to the cell inner membrane. It carries out the reaction an acyl phosphate + sn-glycerol 3-phosphate = a 1-acyl-sn-glycero-3-phosphate + phosphate. It functions in the pathway lipid metabolism; phospholipid metabolism. Its function is as follows. Catalyzes the transfer of an acyl group from acyl-phosphate (acyl-PO(4)) to glycerol-3-phosphate (G3P) to form lysophosphatidic acid (LPA). This enzyme utilizes acyl-phosphate as fatty acyl donor, but not acyl-CoA or acyl-ACP. This Wolinella succinogenes (strain ATCC 29543 / DSM 1740 / CCUG 13145 / JCM 31913 / LMG 7466 / NCTC 11488 / FDC 602W) (Vibrio succinogenes) protein is Glycerol-3-phosphate acyltransferase.